Reading from the N-terminus, the 227-residue chain is Large ribosomal subunit protein uL3 (227 aa).

At Q154 the chain carries N5-methylglutamine.

It belongs to the universal ribosomal protein uL3 family. As to quaternary structure, part of the 50S ribosomal subunit. Forms a cluster with proteins L14 and L19. Methylated by PrmB.

One of the primary rRNA binding proteins, it binds directly near the 3'-end of the 23S rRNA, where it nucleates assembly of the 50S subunit. This is Large ribosomal subunit protein uL3 from Acidiphilium cryptum (strain JF-5).